A 124-amino-acid polypeptide reads, in one-letter code: Large ribosomal subunit protein uL22 (124 aa).

This sequence belongs to the universal ribosomal protein uL22 family. As to quaternary structure, part of the 50S ribosomal subunit.

In terms of biological role, this protein binds specifically to 23S rRNA; its binding is stimulated by other ribosomal proteins, e.g. L4, L17, and L20. It is important during the early stages of 50S assembly. It makes multiple contacts with different domains of the 23S rRNA in the assembled 50S subunit and ribosome. Functionally, the globular domain of the protein is located near the polypeptide exit tunnel on the outside of the subunit, while an extended beta-hairpin is found that lines the wall of the exit tunnel in the center of the 70S ribosome. This chain is Large ribosomal subunit protein uL22, found in Macrococcus caseolyticus (strain JCSC5402) (Macrococcoides caseolyticum).